A 137-amino-acid polypeptide reads, in one-letter code: Large ribosomal subunit protein uL16c (137 aa).

It belongs to the universal ribosomal protein uL16 family. Part of the 50S ribosomal subunit.

Its subcellular location is the plastid. The protein resides in the chloroplast. The chain is Large ribosomal subunit protein uL16c from Thalassiosira pseudonana (Marine diatom).